We begin with the raw amino-acid sequence, 398 residues long: Tryptophan synthase beta chain (398 aa).

Lys-88 bears the N6-(pyridoxal phosphate)lysine mark.

Belongs to the TrpB family. In terms of assembly, tetramer of two alpha and two beta chains. Requires pyridoxal 5'-phosphate as cofactor.

The enzyme catalyses (1S,2R)-1-C-(indol-3-yl)glycerol 3-phosphate + L-serine = D-glyceraldehyde 3-phosphate + L-tryptophan + H2O. Its pathway is amino-acid biosynthesis; L-tryptophan biosynthesis; L-tryptophan from chorismate: step 5/5. The beta subunit is responsible for the synthesis of L-tryptophan from indole and L-serine. The chain is Tryptophan synthase beta chain from Haemophilus influenzae (strain PittGG).